A 500-amino-acid chain; its full sequence is Tyrosine decarboxylase 2 (500 aa).

Tandem repeats lie at residues 65-122 (EDIR…TELE) and 125-176 (VLDW…GKRS). The segment at 65 to 176 (EDIRQKIVPG…KFLNRFGKRS (112 aa)) is 2 X approximate tandem repeats. Position 89 (Ser-89) interacts with substrate. Pyridoxal 5'-phosphate contacts are provided by Ala-153 and Ser-154. His-189 is a binding site for substrate. Positions 248 and 302 each coordinate pyridoxal 5'-phosphate. Lys-305 is modified (N6-(pyridoxal phosphate)lysine).

The protein belongs to the group II decarboxylase family. Requires pyridoxal 5'-phosphate as cofactor. Mostly expressed in bulbs, and, to a lower extent, in stems, roots, leaves and flowers.

The enzyme catalyses L-tyrosine + H(+) = tyramine + CO2. The protein operates within alkaloid biosynthesis. Functionally, catalyzes the decarboxylation of L-tyrosine to tyramine, which is converted to norbelladine, a precursor to all Amaryllidaceae alkaloids such as galanthamine, lycorine and haemanthamine, and including haemanthamine- and crinamine-type alkaloids, promising anticancer agents. In Narcissus pseudonarcissus (Daffodil), this protein is Tyrosine decarboxylase 2.